Consider the following 518-residue polypeptide: 3-octaprenyl-4-hydroxybenzoate carboxy-lyase (518 aa).

Asn-177 contributes to the Mn(2+) binding site. Prenylated FMN-binding positions include 180–182 (IYR), 194–196 (RWL), and 199–200 (RG). Glu-243 contributes to the Mn(2+) binding site. Asp-318 serves as the catalytic Proton donor.

Belongs to the UbiD family. In terms of assembly, homohexamer. Requires prenylated FMN as cofactor. The cofactor is Mn(2+).

It localises to the cell membrane. It carries out the reaction a 4-hydroxy-3-(all-trans-polyprenyl)benzoate + H(+) = a 2-(all-trans-polyprenyl)phenol + CO2. It participates in cofactor biosynthesis; ubiquinone biosynthesis. In terms of biological role, catalyzes the decarboxylation of 3-octaprenyl-4-hydroxy benzoate to 2-octaprenylphenol, an intermediate step in ubiquinone biosynthesis. This chain is 3-octaprenyl-4-hydroxybenzoate carboxy-lyase, found in Burkholderia multivorans (strain ATCC 17616 / 249).